Consider the following 458-residue polypeptide: Sphingomyelinase DDB_G0288017 (458 aa).

The segment at 91–111 is disordered; it reads NKKAKSPPPPSSLKQQNLHNN. Glu135 contributes to the Mg(2+) binding site. The active-site Proton acceptor is the His447.

This sequence belongs to the neutral sphingomyelinase family. The cofactor is Mg(2+).

It carries out the reaction a sphingomyelin + H2O = phosphocholine + an N-acylsphing-4-enine + H(+). It participates in lipid metabolism; sphingolipid metabolism. In terms of biological role, catalyzes the hydrolysis of sphingomyelin to form ceramide and phosphocholine. This chain is Sphingomyelinase DDB_G0288017, found in Dictyostelium discoideum (Social amoeba).